A 430-amino-acid chain; its full sequence is Adenylosuccinate synthetase (430 aa).

Residues 12–18 and 40–42 each bind GTP; these read GDEGKGK and GHT. The Proton acceptor role is filled by aspartate 13. Positions 13 and 40 each coordinate Mg(2+). Residues 13 to 16, 38 to 41, threonine 130, arginine 144, glutamine 224, threonine 239, and arginine 303 contribute to the IMP site; these read DEGK and NAGH. The active-site Proton donor is histidine 41. Substrate is bound at residue 299 to 305; sequence TNTGRPR. GTP-binding positions include arginine 305, 331 to 333, and 413 to 415; these read KLD and STS.

Belongs to the adenylosuccinate synthetase family. In terms of assembly, homodimer. The cofactor is Mg(2+).

It is found in the cytoplasm. It carries out the reaction IMP + L-aspartate + GTP = N(6)-(1,2-dicarboxyethyl)-AMP + GDP + phosphate + 2 H(+). Its pathway is purine metabolism; AMP biosynthesis via de novo pathway; AMP from IMP: step 1/2. Functionally, plays an important role in the de novo pathway of purine nucleotide biosynthesis. Catalyzes the first committed step in the biosynthesis of AMP from IMP. The protein is Adenylosuccinate synthetase of Rhodopseudomonas palustris (strain BisB5).